Here is a 112-residue protein sequence, read N- to C-terminus: Protein SMALL AUXIN UP-REGULATED RNA 10 (112 aa).

Belongs to the ARG7 family. In terms of tissue distribution, confined to the veins and petioles of rosette leaves and cauline leaves, and specifically expressed at the abaxial side of inflorescence branche; relocates to both the adaxial (Ad) and abaxial (Ab) sides of the branch in reduced red:far-red (R:FR) light, during shade. Also present in flowers.

The protein localises to the cell membrane. Provide a mechanistic link between auxin and plasma membrane H(+)-ATPases (PM H(+)-ATPases, e.g. AHA1 and AHA2), and triggers PM H(+)-ATPases activity by promoting phosphorylation of their C-terminal autoinhibitory domain as a result of PP2C-D subfamily of type 2C phosphatases inhibition, thus leading to the acidification of the apoplast and the facilitation of solutes and water uptake to drive cell expansion. Triggers plant growth probably by promoting cell elongation. Regulates branch angles and bending. In Arabidopsis thaliana (Mouse-ear cress), this protein is Protein SMALL AUXIN UP-REGULATED RNA 10.